The following is an 840-amino-acid chain: Leucine-zipper-like transcriptional regulator 1 (840 aa).

The residue at position 2 (A2) is an N-acetylalanine. Kelch repeat units lie at residues 79–128 (AIYV…VYGS), 130–185 (MFVF…VYSD), 187–238 (LWIF…VCRD), 239–285 (KMFV…QRRY), 295–341 (HLYV…PERA), and 399–450 (AMYI…FVLG). BTB domains are found at residues 443–537 (CDVE…KYPR) and 667–736 (CDIT…NMPP).

This sequence belongs to the LZTR1 family. Homodimer. Component of the BCR(LZTR1) E3 ubiquitin ligase complex, at least composed of CUL3, LZTR1 and RBX1. Interacts with Ras (K-Ras/KRAS, N-Ras/NRAS and H-Ras/HRAS). Interacts with RAF1. Interacts with SHOC2. Interacts with PPP1CB. Phosphorylated on tyrosine upon induction of apoptosis, leading to its degradation by the proteasome.

It is found in the endomembrane system. It localises to the recycling endosome. The protein localises to the golgi apparatus. Its pathway is protein modification; protein ubiquitination. In terms of biological role, substrate-specific adapter of a BCR (BTB-CUL3-RBX1) E3 ubiquitin-protein ligase complex that mediates ubiquitination of Ras (K-Ras/KRAS, N-Ras/NRAS and H-Ras/HRAS). Is a negative regulator of RAS-MAPK signaling that acts by controlling Ras levels and decreasing Ras association with membranes. The chain is Leucine-zipper-like transcriptional regulator 1 from Homo sapiens (Human).